We begin with the raw amino-acid sequence, 83 residues long: Short neurotoxin OKI-Ed (83 aa).

Positions 1 to 21 are cleaved as a signal peptide; sequence MKTLLLTLVVVTIVCLDLGYT. Disulfide bonds link C24/C45, C38/C62, C64/C75, and C76/C81.

This sequence belongs to the three-finger toxin family. Short-chain subfamily. Type I alpha-neurotoxin sub-subfamily. In terms of tissue distribution, expressed by the venom gland.

The protein resides in the secreted. Binds to muscle nicotinic acetylcholine receptor (nAChR) and inhibit acetylcholine from binding to the receptor, thereby impairing neuromuscular transmission. The sequence is that of Short neurotoxin OKI-Ed from Laticauda semifasciata (Black-banded sea krait).